Here is a 319-residue protein sequence, read N- to C-terminus: Shiga-like toxin 2 subunit A (319 aa).

The signal sequence occupies residues 1–22; sequence MKCILFKWVLCLLLGFSSVSYS. Positions 23–272 are A1; the sequence is REFTIDFSTQ…CHHQGARSVR (250 aa). Glu-189 is a catalytic residue. Cys-263 and Cys-282 are disulfide-bonded. The tract at residues 273–314 is A2; the sequence is AVNEESQPECQITGDRPVIKINNTLWESNTAAAFLNRKSQFL.

The protein belongs to the ribosome-inactivating protein family. As to quaternary structure, shiga-like toxin contains a single A subunit and multiple copies of a B subunit.

Its subcellular location is the secreted. It catalyses the reaction Endohydrolysis of the N-glycosidic bond at one specific adenosine on the 28S rRNA.. In terms of biological role, the A subunit is responsible for inhibiting protein synthesis through the catalytic inactivation of 60S ribosomal subunits. After endocytosis, the A subunit is cleaved by furin in two fragments, A1 and A2: A1 is the catalytically active fragment, and A2 is essential for holotoxin assembly with the B subunits. In Escherichia coli O157:H7 (Bacteriophage 933W), this protein is Shiga-like toxin 2 subunit A (stxA2).